The chain runs to 217 residues: Large ribosomal subunit protein uL1 (217 aa).

N6,N6-dimethyllysine; alternate is present on lysine 122. Lysine 122 carries the N6-methyllysine; alternate modification.

It belongs to the universal ribosomal protein uL1 family.

The polypeptide is Large ribosomal subunit protein uL1 (rpl10a) (Dictyostelium discoideum (Social amoeba)).